The chain runs to 201 residues: Cardiotrophin-1 (201 aa).

It belongs to the IL-6 superfamily. In terms of tissue distribution, highly expressed in heart, skeletal muscle, prostate and ovary. Lower levels in lung, kidney, pancreas, thymus, testis and small intestine. Little or no expression in brain, placenta, liver, spleen, colon or peripheral blood leukocytes.

The protein localises to the secreted. Induces cardiac myocyte hypertrophy in vitro. Binds to and activates the ILST/gp130 receptor. The chain is Cardiotrophin-1 (CTF1) from Homo sapiens (Human).